A 184-amino-acid chain; its full sequence is NADH-quinone oxidoreductase subunit B (184 aa).

[4Fe-4S] cluster-binding residues include cysteine 37, cysteine 38, cysteine 103, and cysteine 132.

This sequence belongs to the complex I 20 kDa subunit family. NDH-1 is composed of 14 different subunits. Subunits NuoB, C, D, E, F, and G constitute the peripheral sector of the complex. [4Fe-4S] cluster serves as cofactor.

It localises to the cell membrane. It carries out the reaction a quinone + NADH + 5 H(+)(in) = a quinol + NAD(+) + 4 H(+)(out). Functionally, NDH-1 shuttles electrons from NADH, via FMN and iron-sulfur (Fe-S) centers, to quinones in the respiratory chain. The immediate electron acceptor for the enzyme in this species is believed to be a menaquinone. Couples the redox reaction to proton translocation (for every two electrons transferred, four hydrogen ions are translocated across the cytoplasmic membrane), and thus conserves the redox energy in a proton gradient. The chain is NADH-quinone oxidoreductase subunit B from Mycobacterium sp. (strain JLS).